Here is an 85-residue protein sequence, read N- to C-terminus: uncharacterized protein (85 aa).

2 consecutive transmembrane segments (helical) span residues 16–34 (WALSLSILYVIGWCLCAYL) and 50–71 (LSCIYLPILFIVIGHWIIKIIF).

The protein to E.coli YhdT.

It is found in the cell membrane. This is an uncharacterized protein from Haemophilus influenzae (strain ATCC 51907 / DSM 11121 / KW20 / Rd).